The sequence spans 209 residues: Uracil phosphoribosyltransferase (209 aa).

Residues Arg-79, Arg-104, and 131 to 139 (DPMLATGHS) each bind 5-phospho-alpha-D-ribose 1-diphosphate. Uracil is bound by residues Ile-194 and 199-201 (GDA). Asp-200 is a 5-phospho-alpha-D-ribose 1-diphosphate binding site.

It belongs to the UPRTase family. It depends on Mg(2+) as a cofactor.

It carries out the reaction UMP + diphosphate = 5-phospho-alpha-D-ribose 1-diphosphate + uracil. Its pathway is pyrimidine metabolism; UMP biosynthesis via salvage pathway; UMP from uracil: step 1/1. Allosterically activated by GTP. Its function is as follows. Catalyzes the conversion of uracil and 5-phospho-alpha-D-ribose 1-diphosphate (PRPP) to UMP and diphosphate. This Caulobacter vibrioides (strain ATCC 19089 / CIP 103742 / CB 15) (Caulobacter crescentus) protein is Uracil phosphoribosyltransferase.